Here is a 207-residue protein sequence, read N- to C-terminus: Thymidylate kinase (207 aa).

10-17 (GIEGSGKS) serves as a coordination point for ATP.

This sequence belongs to the thymidylate kinase family.

It catalyses the reaction dTMP + ATP = dTDP + ADP. Functionally, phosphorylation of dTMP to form dTDP in both de novo and salvage pathways of dTTP synthesis. The protein is Thymidylate kinase of Halothermothrix orenii (strain H 168 / OCM 544 / DSM 9562).